A 752-amino-acid chain; its full sequence is Mitochondrial Rho GTPase 1 (752 aa).

At 1 to 671 the chain is on the cytoplasmic side; that stretch reads MRKDVRIVLA…RNALSYGTNR (671 aa). The Miro 1 domain occupies 2–170; it reads RKDVRIVLAG…FYFAQKAVLY (169 aa). GTP-binding positions include 11 to 18, 57 to 61, and 115 to 118; these read GDPDVGKS, DTSSS, and NKID. EF-hand domains lie at 186 to 221 and 333 to 368; these read ACVD…CFDT and NGYQ…APDN. Positions 199, 201, 203, 210, 346, 348, 350, and 357 each coordinate Ca(2+). The interval 426 to 460 is disordered; sequence SSGSASTPAPIPLTPTGPPGSRPSRNRTPCPPSTI. A compositionally biased stretch (pro residues) spans 434–446; the sequence is APIPLTPTGPPGS. Residues 481-651 enclose the Miro 2 domain; sequence RSVFLGFVLG…YGLICTIAVD (171 aa). GTP is bound by residues 490–497, 526–530, and 595–598; these read GAAGSGKT, EQAGA, and TKAD. A helical; Anchor for type IV membrane protein membrane pass occupies residues 672–692; sequence WQFWGYIGLVVIGGGGAVWIC. The Mitochondrial intermembrane portion of the chain corresponds to 693 to 752; sequence AKVLKVPIGSTLGFGSSASTTSWWLSGAQARGAGGPNATKVSSWFDWIRWQSSSNVRSEL.

This sequence belongs to the mitochondrial Rho GTPase family.

The protein localises to the mitochondrion outer membrane. Its function is as follows. Mitochondrial GTPase involved in mitochondrial trafficking. Probably involved in control of anterograde transport of mitochondria and their subcellular distribution. The polypeptide is Mitochondrial Rho GTPase 1 (GEM1) (Mycosarcoma maydis (Corn smut fungus)).